A 571-amino-acid chain; its full sequence is DExH-box ATP-dependent RNA helicase DExH16, mitochondrial (571 aa).

A mitochondrion-targeting transit peptide spans Met-1 to Pro-56. In terms of domain architecture, Helicase ATP-binding spans Ile-83 to Pro-212. Gly-96–Thr-103 contacts ATP. Residues Asp-176–Gln-179 carry the DEIH box; degenerate motif. The Helicase C-terminal domain maps to Leu-213–Ser-399.

It belongs to the DExH box helicase family. Homodimer; in free form. Component of the mitochondrial degradosome (mtEXO) complex which is a heteropentamer containing 2 copies of SUPV3L1 and 3 copies of PNPT1. Mg(2+) serves as cofactor. Mn(2+) is required as a cofactor. As to expression, weakly expressed.

The protein resides in the nucleus. Its subcellular location is the mitochondrion matrix. It localises to the mitochondrion nucleoid. The enzyme catalyses ATP + H2O = ADP + phosphate + H(+). Its activity is regulated as follows. Activated by the presence of mitochondrial RNA. Major helicase player in mitochondrial RNA metabolism. Component of the mitochondrial degradosome (mtEXO) complex, that degrades 3' overhang double-stranded RNA with a 3'-to-5' directionality in an ATP-dependent manner. ATPase and ATP-dependent multisubstrate helicase, able to unwind double-stranded (ds) DNA and RNA, and RNA/DNA heteroduplexes in the 5'-to-3' direction. Plays a role in the RNA surveillance system in mitochondria; regulates the stability of mature mRNAs, the removal of aberrantly formed mRNAs and the rapid degradation of non coding processing intermediates. Required during pollen development. This Arabidopsis thaliana (Mouse-ear cress) protein is DExH-box ATP-dependent RNA helicase DExH16, mitochondrial.